Here is a 117-residue protein sequence, read N- to C-terminus: Large ribosomal subunit protein bL20 (117 aa).

This sequence belongs to the bacterial ribosomal protein bL20 family.

In terms of biological role, binds directly to 23S ribosomal RNA and is necessary for the in vitro assembly process of the 50S ribosomal subunit. It is not involved in the protein synthesizing functions of that subunit. This chain is Large ribosomal subunit protein bL20, found in Ruminiclostridium cellulolyticum (strain ATCC 35319 / DSM 5812 / JCM 6584 / H10) (Clostridium cellulolyticum).